The chain runs to 558 residues: Kelch-like protein 23 (558 aa).

In terms of domain architecture, BTB spans Thr36–Lys104. In terms of domain architecture, BACK spans Cys139–Gly240. 6 Kelch repeats span residues Thr274–Pro320, Asn321–Gly369, Cys370–Glu416, Ile418–Asn466, Lys467–Gly508, and Ile510–Asn557.

In Mus musculus (Mouse), this protein is Kelch-like protein 23 (Klhl23).